Here is a 100-residue protein sequence, read N- to C-terminus: uncharacterized protein (100 aa).

It to M.jannaschii MJ1155.1.

This is an uncharacterized protein from Archaeoglobus fulgidus (strain ATCC 49558 / DSM 4304 / JCM 9628 / NBRC 100126 / VC-16).